We begin with the raw amino-acid sequence, 258 residues long: Global transcriptional regulator CodY (258 aa).

Residues 1-156 (MSSLLDKTRM…SATIIGLEIL (156 aa)) form a GAF domain region. The H-T-H motif DNA-binding region spans 204–223 (ASKIADKVGITRSVIVNALR).

It belongs to the CodY family.

The protein resides in the cytoplasm. In terms of biological role, DNA-binding global transcriptional regulator which is involved in the adaptive response to starvation and acts by directly or indirectly controlling the expression of numerous genes in response to nutrient availability. During rapid exponential growth, CodY is highly active and represses genes whose products allow adaptation to nutrient depletion. This chain is Global transcriptional regulator CodY, found in Clostridium botulinum (strain ATCC 19397 / Type A).